Here is a 224-residue protein sequence, read N- to C-terminus: Ribose-5-phosphate isomerase A (224 aa).

Substrate contacts are provided by residues 26 to 29 (TGST), 82 to 85 (DGAD), and 95 to 98 (KGGG). The active-site Proton acceptor is the Glu104. Residue Lys122 participates in substrate binding.

The protein belongs to the ribose 5-phosphate isomerase family. Homodimer.

The catalysed reaction is aldehydo-D-ribose 5-phosphate = D-ribulose 5-phosphate. It functions in the pathway carbohydrate degradation; pentose phosphate pathway; D-ribose 5-phosphate from D-ribulose 5-phosphate (non-oxidative stage): step 1/1. Catalyzes the reversible conversion of ribose-5-phosphate to ribulose 5-phosphate. This is Ribose-5-phosphate isomerase A from Streptococcus suis (strain 98HAH33).